The following is a 356-amino-acid chain: MATQRKIIHIDMDCFYAAIEMRENPALIGKPVAVGGSVEGRGVLTTCNYEARKFGLHSAMPTAQALKRCPNLILVPVNMPLYKAVSEQIHQIFRRYTDIVELLSLDEAYLDVTDCRQCSGSATWIAQEIRDAIWNELHLTASAGIAPLKFLAKIASDQNKPNGQFVISPENMTAFIYDLPLKKIPRVGKVTNEKLAQLGLHTCGDIQHSDKAFIYKTFGKFGQRLWEFSHAIDNRKIEANRPRKSLAVENTLPTDIWHLAEAEQIVDELFKKLVFRLQRNWGERSLQEFKKLAIKLKFGDFTQTTLERTTDGLSRERFIELLQQVWQRTNRRSVRLIGLSVHYPTEKVKKQLNLWE.

The UmuC domain maps to 7-188; the sequence is IIHIDMDCFY…LPLKKIPRVG (182 aa). Mg(2+) is bound by residues D11 and D106. E107 is a catalytic residue.

The protein belongs to the DNA polymerase type-Y family. In terms of assembly, monomer. Requires Mg(2+) as cofactor.

The protein resides in the cytoplasm. It carries out the reaction DNA(n) + a 2'-deoxyribonucleoside 5'-triphosphate = DNA(n+1) + diphosphate. In terms of biological role, poorly processive, error-prone DNA polymerase involved in untargeted mutagenesis. Copies undamaged DNA at stalled replication forks, which arise in vivo from mismatched or misaligned primer ends. These misaligned primers can be extended by PolIV. Exhibits no 3'-5' exonuclease (proofreading) activity. May be involved in translesional synthesis, in conjunction with the beta clamp from PolIII. The sequence is that of DNA polymerase IV from Actinobacillus pleuropneumoniae serotype 5b (strain L20).